The primary structure comprises 86 residues: Large ribosomal subunit protein bL31 (86 aa).

Residues Tyr-65–Lys-86 are disordered. The span at Lys-76–Lys-86 shows a compositional bias: basic and acidic residues.

It belongs to the bacterial ribosomal protein bL31 family. Type A subfamily. As to quaternary structure, part of the 50S ribosomal subunit.

In terms of biological role, binds the 23S rRNA. The chain is Large ribosomal subunit protein bL31 from Prochlorococcus marinus (strain MIT 9312).